Here is a 381-residue protein sequence, read N- to C-terminus: NAD-dependent methanol dehydrogenase (381 aa).

It belongs to the iron-containing alcohol dehydrogenase family. As to quaternary structure, homodecamer. It depends on Mg(2+) as a cofactor. Zn(2+) is required as a cofactor.

The protein localises to the cytoplasm. It catalyses the reaction methanol + NAD(+) = formaldehyde + NADH + H(+). The protein operates within one-carbon metabolism; methanol degradation; formaldehyde from methanol: step 1/1. With respect to regulation, stimulated by the activator protein Act which requires the presence of magnesium ions. Inhibited by 1,10-phenanthroline. Catalyzes the oxidation of methanol to yield formaldehyde. It possesses a NADH-dependent formaldehyde reductase activity and cannot use NADP. The chain is NAD-dependent methanol dehydrogenase from Bacillus methanolicus.